Consider the following 383-residue polypeptide: Alanine racemase (383 aa).

Lysine 50 acts as the Proton acceptor; specific for D-alanine in catalysis. N6-(pyridoxal phosphate)lysine is present on lysine 50. Residue arginine 151 participates in substrate binding. The active-site Proton acceptor; specific for L-alanine is tyrosine 279. Methionine 327 lines the substrate pocket.

Belongs to the alanine racemase family. Pyridoxal 5'-phosphate serves as cofactor.

It catalyses the reaction L-alanine = D-alanine. It functions in the pathway amino-acid biosynthesis; D-alanine biosynthesis; D-alanine from L-alanine: step 1/1. Functionally, catalyzes the interconversion of L-alanine and D-alanine. May also act on other amino acids. In Chlorobaculum tepidum (strain ATCC 49652 / DSM 12025 / NBRC 103806 / TLS) (Chlorobium tepidum), this protein is Alanine racemase (alr).